Here is a 268-residue protein sequence, read N- to C-terminus: MTAQQPPRLLRGIPLAVRNLQKTFGSRQVLRGIDLHIPAGQFVAVVGRSGCGKSTLLRLLAGLDQPTGGDLLAGSAPLTDARDDTRLMFQEARLLPWKKIIDNVGLGLKGNWRAQALQALDAVGLADRANEWPAALSGGQKQRVALARALIHQPRLLLLDEPLGALDALTRIEMQQLIERLWQQHGFTVLLVTHDVSEAVAIADRVILIEDGEVGLDLPVELPRPRVRGSHRLAALETEVLNRVLSLPGEPPAPEPVSPLPTQLRWAQ.

An ABC transporter domain is found at 15 to 236 (LAVRNLQKTF…VRGSHRLAAL (222 aa)). 47–54 (GRSGCGKS) is an ATP binding site.

Belongs to the ABC transporter superfamily. Aliphatic sulfonates importer (TC 3.A.1.17.2) family. The complex is composed of two ATP-binding proteins (SsuB), two transmembrane proteins (SsuC) and a solute-binding protein (SsuA).

The protein resides in the cell inner membrane. The enzyme catalyses ATP + H2O + aliphatic sulfonate-[sulfonate-binding protein]Side 1 = ADP + phosphate + aliphatic sulfonateSide 2 + [sulfonate-binding protein]Side 1.. In terms of biological role, part of the ABC transporter complex SsuABC involved in aliphatic sulfonates import. Responsible for energy coupling to the transport system. In Pseudomonas fluorescens (strain Pf0-1), this protein is Aliphatic sulfonates import ATP-binding protein SsuB.